Reading from the N-terminus, the 375-residue chain is Histidine biosynthesis bifunctional protein HisB (375 aa).

A histidinol-phosphatase region spans residues 1-168 (MTPIVFIDRD…GIAHTLADAP (168 aa)). Residue D8 is the Nucleophile of the active site. 3 residues coordinate Mg(2+): D8, D10, and D128. D10 functions as the Proton donor in the catalytic mechanism. The imidazoleglycerol-phosphate dehydratase stretch occupies residues 169-375 (RRAVVQRHTK…HVLPSTKGAL (207 aa)).

The protein in the N-terminal section; belongs to the histidinol-phosphatase family. In the C-terminal section; belongs to the imidazoleglycerol-phosphate dehydratase family. Requires Mg(2+) as cofactor.

The protein localises to the cytoplasm. It carries out the reaction D-erythro-1-(imidazol-4-yl)glycerol 3-phosphate = 3-(imidazol-4-yl)-2-oxopropyl phosphate + H2O. The enzyme catalyses L-histidinol phosphate + H2O = L-histidinol + phosphate. It participates in amino-acid biosynthesis; L-histidine biosynthesis; L-histidine from 5-phospho-alpha-D-ribose 1-diphosphate: step 6/9. The protein operates within amino-acid biosynthesis; L-histidine biosynthesis; L-histidine from 5-phospho-alpha-D-ribose 1-diphosphate: step 8/9. The chain is Histidine biosynthesis bifunctional protein HisB from Xylella fastidiosa (strain 9a5c).